A 419-amino-acid chain; its full sequence is UDP-N-acetylglucosamine 1-carboxyvinyltransferase (419 aa).

22–23 is a binding site for phosphoenolpyruvate; the sequence is KN. Arginine 91 provides a ligand contact to UDP-N-acetyl-alpha-D-glucosamine. Cysteine 115 serves as the catalytic Proton donor. A 2-(S-cysteinyl)pyruvic acid O-phosphothioketal modification is found at cysteine 115. UDP-N-acetyl-alpha-D-glucosamine-binding positions include 120–124, 160–163, aspartate 305, and isoleucine 327; these read RPVDL and KVSV.

It belongs to the EPSP synthase family. MurA subfamily.

The protein localises to the cytoplasm. The catalysed reaction is phosphoenolpyruvate + UDP-N-acetyl-alpha-D-glucosamine = UDP-N-acetyl-3-O-(1-carboxyvinyl)-alpha-D-glucosamine + phosphate. It functions in the pathway cell wall biogenesis; peptidoglycan biosynthesis. In terms of biological role, cell wall formation. Adds enolpyruvyl to UDP-N-acetylglucosamine. This Klebsiella pneumoniae subsp. pneumoniae (strain ATCC 700721 / MGH 78578) protein is UDP-N-acetylglucosamine 1-carboxyvinyltransferase.